The primary structure comprises 255 residues: 4-hydroxy-tetrahydrodipicolinate reductase (255 aa).

NAD(+)-binding positions include 9–14 (GFKGKM), D35, 89–91 (GTT), and 115–118 (APNF). H145 functions as the Proton donor/acceptor in the catalytic mechanism. H146 is a binding site for (S)-2,3,4,5-tetrahydrodipicolinate. K149 (proton donor) is an active-site residue. Residue 155-156 (GT) coordinates (S)-2,3,4,5-tetrahydrodipicolinate.

This sequence belongs to the DapB family.

It localises to the cytoplasm. The enzyme catalyses (S)-2,3,4,5-tetrahydrodipicolinate + NAD(+) + H2O = (2S,4S)-4-hydroxy-2,3,4,5-tetrahydrodipicolinate + NADH + H(+). It catalyses the reaction (S)-2,3,4,5-tetrahydrodipicolinate + NADP(+) + H2O = (2S,4S)-4-hydroxy-2,3,4,5-tetrahydrodipicolinate + NADPH + H(+). Its pathway is amino-acid biosynthesis; L-lysine biosynthesis via DAP pathway; (S)-tetrahydrodipicolinate from L-aspartate: step 4/4. In terms of biological role, catalyzes the conversion of 4-hydroxy-tetrahydrodipicolinate (HTPA) to tetrahydrodipicolinate. This Streptococcus pneumoniae serotype 19F (strain G54) protein is 4-hydroxy-tetrahydrodipicolinate reductase.